The following is a 172-amino-acid chain: Ribosome maturation factor RimM (172 aa).

The PRC barrel domain maps to 99-171 (DDIPTWNYFI…LLTVEVPDGL (73 aa)).

Belongs to the RimM family. Binds ribosomal protein uS19.

It is found in the cytoplasm. Its function is as follows. An accessory protein needed during the final step in the assembly of 30S ribosomal subunit, possibly for assembly of the head region. Essential for efficient processing of 16S rRNA. May be needed both before and after RbfA during the maturation of 16S rRNA. It has affinity for free ribosomal 30S subunits but not for 70S ribosomes. The sequence is that of Ribosome maturation factor RimM from Phocaeicola vulgatus (strain ATCC 8482 / DSM 1447 / JCM 5826 / CCUG 4940 / NBRC 14291 / NCTC 11154) (Bacteroides vulgatus).